A 634-amino-acid chain; its full sequence is Chaperone protein DnaK (634 aa).

The residue at position 197 (Thr197) is a Phosphothreonine; by autocatalysis. Residues 592–634 are disordered; that stretch reads IGSSVYQQPGNQPPAPGGPNANASDDKGPDDDVIDADFTETKD. Positions 619 to 634 are enriched in acidic residues; sequence GPDDDVIDADFTETKD.

This sequence belongs to the heat shock protein 70 family.

Its function is as follows. Acts as a chaperone. This Prochlorococcus marinus (strain MIT 9515) protein is Chaperone protein DnaK.